Here is a 380-residue protein sequence, read N- to C-terminus: Phosphate acyltransferase (380 aa).

Residues 1-23 (MPSPPPTPETATASDRTATPAPG) form a disordered region.

Belongs to the PlsX family. Homodimer. Probably interacts with PlsY.

It is found in the cytoplasm. The catalysed reaction is a fatty acyl-[ACP] + phosphate = an acyl phosphate + holo-[ACP]. It participates in lipid metabolism; phospholipid metabolism. In terms of biological role, catalyzes the reversible formation of acyl-phosphate (acyl-PO(4)) from acyl-[acyl-carrier-protein] (acyl-ACP). This enzyme utilizes acyl-ACP as fatty acyl donor, but not acyl-CoA. The chain is Phosphate acyltransferase from Acidiphilium cryptum (strain JF-5).